The primary structure comprises 196 residues: Serine/arginine-rich splicing factor RSZ22A (196 aa).

Residues Ser2–Asn71 form the RRM domain. A Phosphoserine modification is found at Ser48. Over residues Val58–His70 the composition is skewed to basic and acidic residues. Residues Val58–Ser196 are disordered. Positions Arg72–Gly87 are enriched in gly residues. Positions Gly88–Glu100 are enriched in basic and acidic residues. The segment at Leu96–Ser113 adopts a CCHC-type zinc-finger fold. Positions Gly119 to Lys135 are enriched in basic residues. 7 positions are modified to phosphoserine: Ser136, Ser144, Ser146, Ser151, Ser159, Ser170, and Ser196. Positions Tyr139–Ala149 are enriched in low complexity.

Belongs to the splicing factor SR family. RSZ subfamily. As to quaternary structure, component of the spliceosome. Post-translationally, extensively phosphorylated on serine residues in the RS domain.

Its subcellular location is the nucleus. Functionally, probably involved in intron recognition and spliceosome assembly. The chain is Serine/arginine-rich splicing factor RSZ22A (RSZ22A) from Arabidopsis thaliana (Mouse-ear cress).